The chain runs to 283 residues: SNAP25 homologous protein SNAP32 (283 aa).

Disordered stretches follow at residues 1–64 (MSGR…AAAR) and 192–212 (LGLSDHPPQSNARQFHSEPTS). Positions 198–212 (PPQSNARQFHSEPTS) are enriched in polar residues. The t-SNARE coiled-coil homology domain maps to 218 to 280 (EMEKAKQDDG…KGANTRARRL (63 aa)).

This sequence belongs to the SNAP-25 family. In terms of assembly, interacts with SYP121. As to expression, expressed in roots, culms and leaves.

The protein resides in the membrane. Its function is as follows. t-SNARE involved in diverse vesicle trafficking and membrane fusion processes. May be involved in resistance to the rice blast fungus Magnaporthe oryzae. May contribute to host resistance to rice blast through interaction with SYP121. The polypeptide is SNAP25 homologous protein SNAP32 (Oryza sativa subsp. japonica (Rice)).